The following is a 705-amino-acid chain: Crooked neck-like protein 1 (705 aa).

HAT repeat units lie at residues 55–87 (DYRL…WEES), 89–121 (KDLT…MEMK), 123–155 (KNIN…MEDM), 157–188 (GNYP…FEQR), 190–221 (KLFE…FEER), 223–258 (GNIE…FEEK), 260–294 (KEIE…FEKQ), 304–336 (VVLG…MEEI), 338–372 (GEIE…LWIN), 382–418 (KDME…FEIR), 420–451 (LNLD…LEIE), 453–485 (GNFD…LETE), 487–521 (GETV…SEIQ), and 523–554 (KQFD…FVHS). The tract at residues 559–591 (QQQKQRQQQQEEDGDSNTTKKDGGDDDNNDDIN) is disordered. One copy of the HAT 15 repeat lies at 597-629 (IFIEAHKSLSNSDKEERLLLLESWKEFEQTFGN).

This sequence belongs to the crooked-neck family. In terms of assembly, identified in the spliceosome C complex.

The protein resides in the nucleus. It is found in the nucleus speckle. Its function is as follows. Involved in pre-mRNA splicing process. The sequence is that of Crooked neck-like protein 1 (crnkl1) from Dictyostelium discoideum (Social amoeba).